Here is a 445-residue protein sequence, read N- to C-terminus: Tubulin beta chain (445 aa).

GTP-binding residues include Gln-11, Glu-69, Ser-138, Gly-142, Thr-143, Gly-144, Asn-204, and Asn-226. Glu-69 provides a ligand contact to Mg(2+). Positions 426 to 445 are disordered; that stretch reads QDATAEEEGEFEEEEGDVEA. Positions 429–445 are enriched in acidic residues; that stretch reads TAEEEGEFEEEEGDVEA.

Belongs to the tubulin family. As to quaternary structure, dimer of alpha and beta chains. A typical microtubule is a hollow water-filled tube with an outer diameter of 25 nm and an inner diameter of 15 nM. Alpha-beta heterodimers associate head-to-tail to form protofilaments running lengthwise along the microtubule wall with the beta-tubulin subunit facing the microtubule plus end conferring a structural polarity. Microtubules usually have 13 protofilaments but different protofilament numbers can be found in some organisms and specialized cells. Interacts with DCX/apicortin; the interaction stabilizes microtubule assembly. The cofactor is Mg(2+).

It localises to the cytoplasm. The protein localises to the cytoskeleton. In terms of biological role, tubulin is the major constituent of microtubules, a cylinder consisting of laterally associated linear protofilaments composed of alpha- and beta-tubulin heterodimers. Microtubules grow by the addition of GTP-tubulin dimers to the microtubule end, where a stabilizing cap forms. Below the cap, tubulin dimers are in GDP-bound state, owing to GTPase activity of alpha-tubulin. The sequence is that of Tubulin beta chain from Plasmodium falciparum (isolate 3D7).